Here is a 464-residue protein sequence, read N- to C-terminus: MEKKESLDSSLKEIVSVCKRRGFVYPGSEIYGGLSNTFDYGPYGVELLQNLKQLWWKYFVHLREDIVGLDSSILLNPKVWEASGHVSNFNDPLIDCKNCKTRIRADKFLEDQKGEGFATGLTLEKMNQVIKESNFACPNCGQRGTFTEARDFNLMFKTSHGASAEDSLDIYLRPETAQGIFLNFKNVVSTTRRKIPFGIAQIGKSFRNEIMARQFVFRTREFEQMEMEFFCEPGTQKEWFSHWVNYCMNWLTEQVGIKKENLRVREHEKEELSFYSEGTSDIEFKYNFGWGELWGIASRTDYDLNQHQKFSGEDLKYQDQVQNKKYVPFVVEPALGVNRLFLAVVTDAYEEEKLPDGETRTVLRFSPKIAPVKAAIFPLMKKDGLPEKSREIFADLSKLGNIEYDDGGAIGKRYRRQDEIGTPFCITVDYDTLKDDTVTVRERDSMSQERIAVNQLKNWLFERL.

Substrate is bound by residues Arg-104 and Glu-175. ATP is bound by residues 207–209 (RNE), 217–222 (FRTREF), 292–293 (EL), and 336–339 (GVNR). 222–226 (FEQME) serves as a coordination point for substrate. 332 to 336 (EPALG) contacts substrate.

It belongs to the class-II aminoacyl-tRNA synthetase family. In terms of assembly, homodimer.

It localises to the cytoplasm. The catalysed reaction is tRNA(Gly) + glycine + ATP = glycyl-tRNA(Gly) + AMP + diphosphate. In terms of biological role, catalyzes the attachment of glycine to tRNA(Gly). The polypeptide is Glycine--tRNA ligase (Leptospira interrogans serogroup Icterohaemorrhagiae serovar Lai (strain 56601)).